The following is a 259-amino-acid chain: Ubiquinone biosynthesis protein COQ4 homolog, mitochondrial (259 aa).

The Zn(2+) site is built by H162, D163, H166, and E178.

The protein belongs to the COQ4 family. Component of a multi-subunit COQ enzyme complex. Requires Zn(2+) as cofactor.

It is found in the mitochondrion inner membrane. It catalyses the reaction a 4-hydroxy-3-methoxy-5-(all-trans-polyprenyl)benzoate + H(+) = a 2-methoxy-6-(all-trans-polyprenyl)phenol + CO2. Its pathway is cofactor biosynthesis; ubiquinone biosynthesis. In terms of biological role, lyase that catalyzes the C1-decarboxylation of 4-hydroxy-3-methoxy-5-(all-trans-polyprenyl)benzoic acid into 2-methoxy-6-(all-trans-polyprenyl)phenol during ubiquinone biosynthesis. This is Ubiquinone biosynthesis protein COQ4 homolog, mitochondrial from Bombyx mori (Silk moth).